The primary structure comprises 470 residues: 6-phospho-beta-glucosidase BglB (470 aa).

The Proton donor role is filled by glutamate 172. Glutamate 361 serves as the catalytic Nucleophile.

This sequence belongs to the glycosyl hydrolase 1 family.

It carries out the reaction 6-phospho-beta-D-glucosyl-(1-&gt;4)-D-glucose + H2O = D-glucose 6-phosphate + D-glucose. In terms of biological role, catalyzes the hydrolysis of phosphorylated beta-glucosides into glucose-6-phosphate (G-6-P) and aglycone. It has a high affinity for phosphorylated aromatic beta-glucosides (p-nitrophenyl-beta-glucoside, phenyl beta-glucoside, arbutin and phosphorylated salicin), and a low affinity for phosphorylated beta-methyl-glucoside. The chain is 6-phospho-beta-glucosidase BglB (bglB) from Escherichia coli (strain K12).